Here is a 158-residue protein sequence, read N- to C-terminus: Cyclic pyranopterin monophosphate synthase (158 aa).

Substrate contacts are provided by residues 75 to 77 (LCH) and 111 to 112 (ME). D126 is a catalytic residue.

This sequence belongs to the MoaC family. As to quaternary structure, homohexamer; trimer of dimers.

The enzyme catalyses (8S)-3',8-cyclo-7,8-dihydroguanosine 5'-triphosphate = cyclic pyranopterin phosphate + diphosphate. It functions in the pathway cofactor biosynthesis; molybdopterin biosynthesis. Its function is as follows. Catalyzes the conversion of (8S)-3',8-cyclo-7,8-dihydroguanosine 5'-triphosphate to cyclic pyranopterin monophosphate (cPMP). The polypeptide is Cyclic pyranopterin monophosphate synthase (Caulobacter vibrioides (strain ATCC 19089 / CIP 103742 / CB 15) (Caulobacter crescentus)).